We begin with the raw amino-acid sequence, 72 residues long: uncharacterized protein (72 aa).

The protein belongs to the ycf76 family.

The protein resides in the plastid. It is found in the chloroplast. This is an uncharacterized protein from Oryza nivara (Indian wild rice).